Here is a 133-residue protein sequence, read N- to C-terminus: Glycine cleavage system H protein (133 aa).

The 83-residue stretch at 24-106 (IATIGISAYA…YGDGWLLKVR (83 aa)) folds into the Lipoyl-binding domain. Lysine 65 carries the post-translational modification N6-lipoyllysine.

The protein belongs to the GcvH family. In terms of assembly, the glycine cleavage system is composed of four proteins: P, T, L and H. (R)-lipoate serves as cofactor.

The glycine cleavage system catalyzes the degradation of glycine. The H protein shuttles the methylamine group of glycine from the P protein to the T protein. This is Glycine cleavage system H protein from Crocosphaera subtropica (strain ATCC 51142 / BH68) (Cyanothece sp. (strain ATCC 51142)).